We begin with the raw amino-acid sequence, 559 residues long: SH3 domain-binding protein 2 (559 aa).

Residues 26–130 (GVAKAGYLHK…WMAFVRREIG (105 aa)) form the PH domain. The segment at 164-449 (LSSYPMDNED…EDSDEDYEKV (286 aa)) is disordered. The span at 170–184 (DNEDYEHEDEDDSYL) shows a compositional bias: acidic residues. Residues Tyr174 and Tyr183 each carry the phosphotyrosine; by SYK modification. Positions 201-210 (PPAYPPPPVP) match the SH3-binding motif. 2 stretches are compositionally biased toward pro residues: residues 202 to 213 (PAYPPPPVPVPR) and 233 to 242 (PLLPPPPPKR). The segment covering 252 to 265 (EDAKDALGLRRVEP) has biased composition (basic and acidic residues). Ser277 is subject to Phosphoserine. The span at 313–327 (TSSVSSSTTMAVATS) shows a compositional bias: low complexity. Residues 360 to 371 (KIAEEPSPREAA) show a composition bias toward basic and acidic residues. The span at 375–386 (PVPPVAPRPPVQ) shows a compositional bias: pro residues. Phosphoserine occurs at positions 414 and 425. Over residues 437-446 (TGEEDSDEDY) the composition is skewed to acidic residues. The residue at position 446 (Tyr446) is a Phosphotyrosine; by SYK. In terms of domain architecture, SH2 spans 455–553 (VFVNTTESCE…HQSLLLRHPY (99 aa)).

In terms of processing, phosphorylated. Phosphorylation at Tyr-446 may stimulate the activity of the LYN kinase.

Functionally, binds differentially to the SH3 domains of certain proteins of signal transduction pathways. Binds to phosphatidylinositols; linking the hemopoietic tyrosine kinase fes to the cytoplasmic membrane in a phosphorylation dependent mechanism. The chain is SH3 domain-binding protein 2 (Sh3bp2) from Mus musculus (Mouse).